Reading from the N-terminus, the 549-residue chain is Glucose-6-phosphate isomerase (549 aa).

N6-acetyllysine occurs at positions 80, 228, and 234. Glutamate 355 acts as the Proton donor in catalysis. Catalysis depends on residues histidine 386 and lysine 514.

The protein belongs to the GPI family.

It is found in the cytoplasm. The enzyme catalyses alpha-D-glucose 6-phosphate = beta-D-fructose 6-phosphate. It functions in the pathway carbohydrate biosynthesis; gluconeogenesis. It participates in carbohydrate degradation; glycolysis; D-glyceraldehyde 3-phosphate and glycerone phosphate from D-glucose: step 2/4. Catalyzes the reversible isomerization of glucose-6-phosphate to fructose-6-phosphate. The protein is Glucose-6-phosphate isomerase of Escherichia coli O127:H6 (strain E2348/69 / EPEC).